Consider the following 129-residue polypeptide: M-zodatoxin-Lt8g (129 aa).

The first 20 residues, 1–20 (MKYFVVALALVAAFACIAES), serve as a signal peptide directing secretion. Positions 21–60 (KPAESEHELAEVEEENELADLEDAVWLEHLADLSDLEEAR) are excised as a propeptide. The Processing quadruplet motif signature appears at 57-60 (EEAR).

Cleavage of the propeptide depends on the processing quadruplet motif (XXXR, with at least one of X being E). In terms of tissue distribution, expressed by the venom gland.

Its subcellular location is the secreted. In terms of biological role, insecticidal, cytolytic and antimicrobial peptide. Has insecticidal activity against the flesh fly S.carnaria. Has antibacterial activity against the Gram-negative bacteria E.coli. Forms voltage-dependent, ion-permeable channels in membranes. At high concentration causes cell membrane lysis. The sequence is that of M-zodatoxin-Lt8g (cit 1-8) from Lachesana tarabaevi (Spider).